The sequence spans 184 residues: Small ribosomal subunit protein bS16 (184 aa).

Over residues 150 to 160 (KKAAEAAEKAA) the composition is skewed to basic and acidic residues. The segment at 150-184 (KKAAEAAEKAAAEAPAEEATEAPAEEAAATEAAAE) is disordered. The segment covering 164 to 173 (PAEEATEAPA) has biased composition (acidic residues). The segment covering 174 to 184 (EEAAATEAAAE) has biased composition (low complexity).

This sequence belongs to the bacterial ribosomal protein bS16 family.

This is Small ribosomal subunit protein bS16 from Bacteroides thetaiotaomicron (strain ATCC 29148 / DSM 2079 / JCM 5827 / CCUG 10774 / NCTC 10582 / VPI-5482 / E50).